The primary structure comprises 155 residues: Pathogenesis-related protein STH-2 (155 aa).

The protein belongs to the BetVI family.

The sequence is that of Pathogenesis-related protein STH-2 (STH-2) from Solanum tuberosum (Potato).